Consider the following 505-residue polypeptide: Circadian clock protein KaiC3 (505 aa).

KaiC domains are found at residues 10-252 (EKLE…KSSD) and 253-485 (IRIT…LAGT). The residue at position 423 (serine 423) is a Phosphoserine; by autocatalysis. Threonine 424 is modified (phosphothreonine; by autocatalysis).

This sequence belongs to the KaiC family. In terms of assembly, multimerizes, probably forming homohexamers, no interaction with KaiC1 or KaiC2 is seen. In another study forms hexamers, interacts with KaiB1, KaiB3, and KaiC1. Post-translationally, autophosphorylates and dephosphorylates. Dephosphorylation of KaiC3 was higher at 25 than at 30 or 35 degrees Celsius.

It catalyses the reaction L-seryl-[protein] + ATP = O-phospho-L-seryl-[protein] + ADP + H(+). The catalysed reaction is L-threonyl-[protein] + ATP = O-phospho-L-threonyl-[protein] + ADP + H(+). It carries out the reaction ATP + H2O = ADP + phosphate + H(+). ATPase activity is influenced by KaiB1 and KaiB3 in vitro; ATPase is reduced 35% by the KaiB1 tetramer and 55% by the KaiB3 monomer but not affected by KaiA or the KaiB3 tetramer. Seems to be linked to dark adaption of Synechocystis cells, but is not as essential as the core oscillator KaiAB1C1 for the circadian cycle. KaiB3 and KaiC3 may cross talk with the core oscillator. Autophosphorylates and dephosphorylates independently of KaiA. Has a weak ATPase, hydrolyzes 8.5 ATP/monomer/day, has no detectable ATP synthesis activity. ATPase activity reduced 55% by KaiB3 monomer but not the KaiB3 tetramer or KaiA in vitro, reduced 35% by KaiB1 tetramer. In Synechocystis sp. (strain ATCC 27184 / PCC 6803 / Kazusa), this protein is Circadian clock protein KaiC3.